Here is a 266-residue protein sequence, read N- to C-terminus: Transmembrane domain-containing protein TMIGD3 (266 aa).

The interval 1–20 (MEGSPAGPIEQKEARWESSW) is disordered. The helical transmembrane segment at 55 to 75 (FLPVMWLFILLSLALISDAMV) threads the bilayer. A glycan (N-linked (GlcNAc...) asparagine) is linked at Asn192. A helical transmembrane segment spans residues 213–233 (ILIICILITGLGIISVISHLT).

As to expression, expressed in the lung and bone. Expressed at lower levels in osteosarcoma tissues (at protein level).

It localises to the membrane. Functionally, plays a suppressive role in osteosarcoma malignancy by inhibiting NF-kappa-B activity. The sequence is that of Transmembrane domain-containing protein TMIGD3 from Homo sapiens (Human).